The following is a 40-amino-acid chain: Photosystem II reaction center protein J (40 aa).

The chain crosses the membrane as a helical span at residues 8-28 (IPLWVIGTVAGIPVIGLIGIF).

This sequence belongs to the PsbJ family. PSII is composed of 1 copy each of membrane proteins PsbA, PsbB, PsbC, PsbD, PsbE, PsbF, PsbH, PsbI, PsbJ, PsbK, PsbL, PsbM, PsbT, PsbX, PsbY, PsbZ, Psb30/Ycf12, at least 3 peripheral proteins of the oxygen-evolving complex and a large number of cofactors. It forms dimeric complexes.

Its subcellular location is the plastid. The protein localises to the chloroplast thylakoid membrane. One of the components of the core complex of photosystem II (PSII). PSII is a light-driven water:plastoquinone oxidoreductase that uses light energy to abstract electrons from H(2)O, generating O(2) and a proton gradient subsequently used for ATP formation. It consists of a core antenna complex that captures photons, and an electron transfer chain that converts photonic excitation into a charge separation. This is Photosystem II reaction center protein J from Nasturtium officinale (Watercress).